Reading from the N-terminus, the 401-residue chain is Exodeoxyribonuclease 7 large subunit (401 aa).

It belongs to the XseA family. As to quaternary structure, heterooligomer composed of large and small subunits.

The protein localises to the cytoplasm. It carries out the reaction Exonucleolytic cleavage in either 5'- to 3'- or 3'- to 5'-direction to yield nucleoside 5'-phosphates.. Bidirectionally degrades single-stranded DNA into large acid-insoluble oligonucleotides, which are then degraded further into small acid-soluble oligonucleotides. This Thermoanaerobacter pseudethanolicus (strain ATCC 33223 / 39E) (Clostridium thermohydrosulfuricum) protein is Exodeoxyribonuclease 7 large subunit.